Here is a 512-residue protein sequence, read N- to C-terminus: MEKFQIYLEXDGFQQQNFLYPLLFREYIYTLXHDHGLNRSAISLENGGYDNKSSSLSMKRLSTLLYQQIHLSIYANDSNPNQFIGHNNNLYSQMISEGFAVIVEIPFSLRLASFLEGQEMAKSHNFQSIHSIFPFFEDNFSHLNYVLDVLIPHPIRPEILVQTFRYWVKDASSLHLLRFFLHEYFNWNSLITPKKSISIFSTSNPRFFLFLYNSHVYEDEFIFFFLRNQSSHLRSTSSGVLFERIHFYGKVNYLVEVFANDFQNILWLFKDPFXHYVRYRGKAILASKDTPLLMNKWKYYLVNLWQWHFHVWSQPGRVHINHLHKYSINFLGYLSRGRLNTLVVRSQMLENAFLIENVMKKFETAVPIISLIESLTKARFCNPLXNPISKPTWADSSDSHIINRFVRICRNLSHYHSGSSKKKGLYRIKYILRVSCVKSLVRKHKSTVRVFLKRLGSEFFREFLTEEEHAISLIFSRASFTWRRLYRGRVWYLDIICINDLVNHDKLEIVFR.

It belongs to the intron maturase 2 family. MatK subfamily.

Its subcellular location is the plastid. The protein resides in the chloroplast. Functionally, usually encoded in the trnK tRNA gene intron. Probably assists in splicing its own and other chloroplast group II introns. This is Maturase K from Koelreuteria paniculata (Goldenrain tree).